A 301-amino-acid chain; its full sequence is MDGLRGDSSGGGGGGGTPGQCRNFLSSPVFGAAHTGRAAAAAAAAASGFAYAGGGERSGAAARPDPPAKDCPGSGAPPAAPALGYGYHFGNGYYSCRMSNGVGIQQNALKSPPHASIGGFPVEKYMDVSSLTSTSVPANEVSTRAKEVSSYQGYTNPYQHVPGYIDMVSTFGSGEPRHETYISMEGYQSWTLANGWNGQVYCAKDQTQSSHFWKSSFPGDVALNQPEMCVYRRGRKKRVPYTKLQLKELENEYAINKFINKDKRRRISAATNLSERQVTIWFQNRRVKDKKIVSKLKDNVS.

2 disordered regions span residues 1 to 20 and 55 to 75; these read MDGL…TPGQ and GERS…PGSG. Gly residues predominate over residues 8–18; that stretch reads SSGGGGGGGTP. The segment at residues 234–293 is a DNA-binding region (homeobox); sequence GRKKRVPYTKLQLKELENEYAINKFINKDKRRRISAATNLSERQVTIWFQNRRVKDKKIV.

Belongs to the Abd-B homeobox family.

It localises to the nucleus. Sequence-specific transcription factor that binds gene promoters and activates their transcription. Part of a developmental regulatory system that provides cells with specific positional identities on the anterior-posterior axis. In Gallus gallus (Chicken), this protein is Homeobox protein Hox-D13 (HOXD13).